A 91-amino-acid chain; its full sequence is Mercuric transport protein periplasmic component (91 aa).

Positions 1-19 are cleaved as a signal peptide; that stretch reads MKKLFASLALAAFVAPVFA. Residues 22 to 88 enclose the HMA domain; that stretch reads QTVTLSVPGM…ATEDAGYPSS (67 aa). Residues Cys-33 and Cys-36 each coordinate Hg(2+).

It belongs to the MerP family. As to quaternary structure, monomer.

It is found in the periplasm. Functionally, involved in mercury resistance. Acts as a mercury scavenger that specifically binds to a mercuric ion in the periplasm and probably passes it to the cytoplasmic mercuric reductase MerA via the mercuric transport protein MerT. This Acinetobacter calcoaceticus protein is Mercuric transport protein periplasmic component.